A 641-amino-acid polypeptide reads, in one-letter code: WW domain-binding protein 11 (641 aa).

Residues 1 to 11 (MGRRSTSSTKS) are compositionally biased toward polar residues. Residues 1-37 (MGRRSTSSTKSGKFMNPTDQARKEARKRELKKNKKQR) are disordered. The interval 1 to 45 (MGRRSTSSTKSGKFMNPTDQARKEARKRELKKNKKQRMMVRAAVL) is required for nuclear import. Residue Lys-13 is modified to N6-acetyllysine. Basic residues predominate over residues 28-37 (RELKKNKKQR). Positions 75–133 (EKVLKDKRKKLRETFERILRLYEKENPDIYKELRKLEVEYEQKRAQLSQYFDAVKNAQH) form a coiled coil. The residue at position 181 (Ser-181) is a Phosphoserine. The tract at residues 186 to 213 (LGHGVPRLPPGRKPPGPPPGPPPPQVVQ) is disordered. Position 192 is an omega-N-methylarginine (Arg-192). Positions 192-210 (RLPPGRKPPGPPPGPPPPQ) are enriched in pro residues. The tract at residues 217 to 221 (RKVGF) is interaction with PP1. Phosphotyrosine is present on Tyr-236. Residues 236 to 552 (YSPELAQRGH…RPKADDTSAA (317 aa)) form a disordered region. Ser-237 carries the post-translational modification Phosphoserine. The span at 253–263 (SEDDGYPEDMD) shows a compositional bias: acidic residues. Over residues 276–304 (TDKSDGESDGDEFVHRDNGERDNNEEKKS) the composition is skewed to basic and acidic residues. Phosphoserine occurs at positions 279 and 283. An interaction with PP1 region spans residues 306–310 (LSVRF). A compositionally biased stretch (acidic residues) spans 351-365 (EFSEDDDEDDSDDSE). 3 positions are modified to phosphoserine: Ser-353, Ser-361, and Ser-364. Over residues 366–380 (AEKQSQKQHKEESHS) the composition is skewed to basic and acidic residues. Low complexity predominate over residues 386–404 (ASSQQQAPPQSVPPSQIQA). Pro residues-rich tracts occupy residues 405 to 447 (PPMP…PPGM), 456 to 504 (RLLP…PPRP), and 510 to 530 (PLVPPLGPAPPGLFPPAPLPN). A PGR motif is present at residues 455–466 (PRLLPPGPPPGR). A Glycyl lysine isopeptide (Lys-Gly) (interchain with G-Cter in SUMO2) cross-link involves residue Lys-557. Lys-565 bears the N6-acetyllysine mark. Lys-572 participates in a covalent cross-link: Glycyl lysine isopeptide (Lys-Gly) (interchain with G-Cter in SUMO2). Residues 587–623 (RENKGATAAPQRKSEDDSAVPLAKAAPKSGPSVPVSV) are disordered. Position 600 is a phosphoserine (Ser-600).

As to quaternary structure, interacts with PPP1CA, PPP1CB and PPP1CC. Interacts via the PGR motif with PQBP1 in the nucleus. Interacts with the WW domains of WBP4. As to expression, ubiquitous. Highly expressed in the heart, pancreas, kidney skeletal muscle, placenta and brain (at protein level). Weakly expressed in liver and lung.

The protein localises to the nucleus. The protein resides in the cytoplasm. Its function is as follows. Activates pre-mRNA splicing. May inhibit PP1 phosphatase activity. This Homo sapiens (Human) protein is WW domain-binding protein 11.